A 336-amino-acid polypeptide reads, in one-letter code: D-alanine--D-alanine ligase (336 aa).

The region spanning 124–330 (KMWFSALGIP…FTEYLSLVIN (207 aa)) is the ATP-grasp domain. 154-209 (ALENWGSIFVKAASQGSSVGCYKVDDSSKVAGVLKDAFGYAPYVIVEKTIKARELE) is an ATP binding site. Mg(2+)-binding residues include aspartate 284, glutamate 297, and asparagine 299.

This sequence belongs to the D-alanine--D-alanine ligase family. It depends on Mg(2+) as a cofactor. Mn(2+) serves as cofactor.

The protein localises to the cytoplasm. The catalysed reaction is 2 D-alanine + ATP = D-alanyl-D-alanine + ADP + phosphate + H(+). Its pathway is cell wall biogenesis; peptidoglycan biosynthesis. Its function is as follows. Cell wall formation. The protein is D-alanine--D-alanine ligase of Shewanella sp. (strain MR-4).